A 186-amino-acid chain; its full sequence is Enhancer of split m7 protein (186 aa).

The bHLH domain occupies 13 to 68 (YRKVMKPLLERKRRARINKCLDELKDLMAECVAQTGDAKFEKADILEVTVQHLRKL). Residues 83 to 116 (FRAGYIRAANEVSRALASLPRVDVAFGTTLMTHL) form the Orange domain. The WRPW motif signature appears at 183–186 (WRPW).

In terms of assembly, transcription repression requires formation of a complex with a corepressor protein (Groucho). Forms homodimers.

It localises to the nucleus. Its function is as follows. Participates in the control of cell fate choice by uncommitted neuroectodermal cells in the embryo. Transcriptional repressor. Binds DNA on N-box motifs: 5'-CACNAG-3'. The polypeptide is Enhancer of split m7 protein (Drosophila melanogaster (Fruit fly)).